The primary structure comprises 277 residues: Coiled-coil domain-containing protein 117 (277 aa).

Residues 22–69 (SPPAFAGRAFPPGAAGHDLAPRPGVRGPPSSPDGRTARGRVSIHCRKK) form a disordered region. The segment covering 23-55 (PPAFAGRAFPPGAAGHDLAPRPGVRGPPSSPDG) has biased composition (low complexity). Arginine 47 bears the Omega-N-methylarginine mark. Residue serine 52 is modified to Phosphoserine. The segment covering 58–69 (ARGRVSIHCRKK) has biased composition (basic residues). A coiled-coil region spans residues 139–166 (QCEVARRRLQEIEDRIIDEDEEVESDRN). Disordered stretches follow at residues 216–242 (LSEKPKPSSNPKNYMGESQTKHTATGT) and 255–277 (QCTDTPLYHSLETAASTEEEMEL). Residues 225–242 (NPKNYMGESQTKHTATGT) are compositionally biased toward polar residues.

Interacts with CIAO2B; the interaction is direct. Interacts with MMS19; the interaction is indirect.

The protein resides in the cytoplasm. It is found in the cytoskeleton. Its subcellular location is the spindle. It localises to the nucleus. Its function is as follows. Facilitates DNA repair, cell cycle progression, and cell proliferation through its interaction with CIAO2B. The chain is Coiled-coil domain-containing protein 117 from Rattus norvegicus (Rat).